The sequence spans 342 residues: S-adenosylmethionine:tRNA ribosyltransferase-isomerase (342 aa).

The protein belongs to the QueA family. As to quaternary structure, monomer.

It is found in the cytoplasm. The catalysed reaction is 7-aminomethyl-7-carbaguanosine(34) in tRNA + S-adenosyl-L-methionine = epoxyqueuosine(34) in tRNA + adenine + L-methionine + 2 H(+). It functions in the pathway tRNA modification; tRNA-queuosine biosynthesis. In terms of biological role, transfers and isomerizes the ribose moiety from AdoMet to the 7-aminomethyl group of 7-deazaguanine (preQ1-tRNA) to give epoxyqueuosine (oQ-tRNA). The polypeptide is S-adenosylmethionine:tRNA ribosyltransferase-isomerase (Sulfurimonas denitrificans (strain ATCC 33889 / DSM 1251) (Thiomicrospira denitrificans (strain ATCC 33889 / DSM 1251))).